The sequence spans 135 residues: Succinate dehydrogenase assembly factor 3, mitochondrial (135 aa).

The transit peptide at 1–12 (MRIFTRLLYAAP) directs the protein to the mitochondrion.

The protein belongs to the complex I LYR family. SDHAF3 subfamily. In terms of assembly, interacts with the iron-sulfur protein subunit within the SDH catalytic dimer.

It localises to the mitochondrion matrix. Its function is as follows. Plays an essential role in the assembly of succinate dehydrogenase (SDH), an enzyme complex (also referred to as respiratory complex II) that is a component of both the tricarboxylic acid (TCA) cycle and the mitochondrial electron transport chain, and which couples the oxidation of succinate to fumarate with the reduction of ubiquinone (coenzyme Q) to ubiquinol. Promotes maturation of the iron-sulfur protein subunit of the SDH catalytic dimer, protecting it from the deleterious effects of oxidants. May act together with SDHAF1. The polypeptide is Succinate dehydrogenase assembly factor 3, mitochondrial (Emericella nidulans (strain FGSC A4 / ATCC 38163 / CBS 112.46 / NRRL 194 / M139) (Aspergillus nidulans)).